A 175-amino-acid chain; its full sequence is ATP-dependent protease subunit HslV (175 aa).

The active site involves Thr-2. Na(+) is bound by residues Ala-159, Asp-162, and Thr-165.

This sequence belongs to the peptidase T1B family. HslV subfamily. As to quaternary structure, a double ring-shaped homohexamer of HslV is capped on each side by a ring-shaped HslU homohexamer. The assembly of the HslU/HslV complex is dependent on binding of ATP.

It localises to the cytoplasm. The enzyme catalyses ATP-dependent cleavage of peptide bonds with broad specificity.. With respect to regulation, allosterically activated by HslU binding. In terms of biological role, protease subunit of a proteasome-like degradation complex believed to be a general protein degrading machinery. This chain is ATP-dependent protease subunit HslV, found in Ligilactobacillus salivarius (strain UCC118) (Lactobacillus salivarius).